Reading from the N-terminus, the 319-residue chain is tRNA uridine(34) hydroxylase (319 aa).

A Rhodanese domain is found at 127–221 (KQEDTVIIDA…YGKDPEVQGE (95 aa)). The Cysteine persulfide intermediate role is filled by cysteine 181.

It belongs to the TrhO family.

It carries out the reaction uridine(34) in tRNA + AH2 + O2 = 5-hydroxyuridine(34) in tRNA + A + H2O. Its function is as follows. Catalyzes oxygen-dependent 5-hydroxyuridine (ho5U) modification at position 34 in tRNAs. The polypeptide is tRNA uridine(34) hydroxylase (Bacillus thuringiensis (strain Al Hakam)).